The sequence spans 148 residues: Snaclec 3 (148 aa).

Positions 1 to 23 are cleaved as a signal peptide; it reads WGDSSSSASACWSCSSPLSGTEA. 3 disulfides stabilise this stretch: C27/C38, C55/C144, and C121/C136. The C-type lectin domain occupies 34–145; sequence YDQNCYKAFE…CSGTHSFVCK (112 aa).

The protein belongs to the snaclec family. Heterodimer; disulfide-linked. Expressed by the venom gland.

It localises to the secreted. Its function is as follows. Interferes with one step of hemostasis (modulation of platelet aggregation, or coagulation cascade, for example). This is Snaclec 3 from Echis carinatus sochureki (Saw-scaled viper).